The sequence spans 1116 residues: Angiopoietin-1 receptor (1116 aa).

The first 21 residues, 1 to 21 (MCLLDSCTALLLLGCWMSGSA), serve as a signal peptide directing secretion. The Extracellular segment spans residues 22–745 (VRISDVTLVN…FAAHGHLLLY (724 aa)). Cysteines 46 and 106 form a disulfide. In terms of domain architecture, Ig-like C2-type 1 spans 46 to 126 (CVSSDWSSGG…YTYKMLQEAA (81 aa)). N-linked (GlcNAc...) asparagine glycans are attached at residues asparagine 110, asparagine 143, and asparagine 223. 3 consecutive EGF-like domains span residues 214–256 (SCRA…HTCD), 258–302 (VCGE…LSCN), and 304–342 (ACPDGYYGAGCTQKCVCAKGRCDRFRGCVCAGRHGSRCE). 12 cysteine pairs are disulfide-bonded: cysteine 215/cysteine 224, cysteine 228/cysteine 237, cysteine 231/cysteine 244, cysteine 246/cysteine 255, cysteine 259/cysteine 268, cysteine 272/cysteine 277, cysteine 283/cysteine 290, cysteine 292/cysteine 301, cysteine 305/cysteine 314, cysteine 318/cysteine 325, cysteine 320/cysteine 331, and cysteine 333/cysteine 341. The Ig-like C2-type 2 domain maps to 348 to 438 (PVISHLRDVE…MQVEDEFTVE (91 aa)). Residues asparagine 367, asparagine 387, and asparagine 425 are each glycosylated (N-linked (GlcNAc...) asparagine). Cysteine 368 and cysteine 422 are disulfide-bonded. Fibronectin type-III domains are found at residues 444-538 (RPQN…TQVL), 540-633 (LPVG…QLPP), and 634-729 (PPAN…TLPQ). 3 N-linked (GlcNAc...) asparagine glycosylation sites follow: asparagine 590, asparagine 637, and asparagine 642. A helical membrane pass occupies residues 746–766 (AILGSAGMTCCTVLLAFCIVL). Over 767 to 1116 (QLKRNTLQRR…GIDCSAEEAG (350 aa)) the chain is Cytoplasmic. Residues 816 to 1095 (IQFQDVLGEG…RMLEERKTYV (280 aa)) form the Protein kinase domain. Residues 822-830 (LGEGNFGQV) and lysine 847 each bind ATP. Tyrosine 852 is subject to Phosphotyrosine; by autocatalysis. Aspartate 956 (proton acceptor) is an active-site residue. Tyrosine 984, tyrosine 1094, and tyrosine 1100 each carry phosphotyrosine; by autocatalysis.

The protein belongs to the protein kinase superfamily. Tyr protein kinase family. Tie subfamily. Interacts with svep1. Autophosphorylated on tyrosine residues in response to ligand binding. Autophosphorylation occurs in trans, i.e. one subunit of the dimeric receptor phosphorylates tyrosine residues on the other subunit. Autophosphorylation occurs in a sequential manner, where Tyr-984 in the kinase activation loop is phosphorylated first, followed by autophosphorylation at additional tyrosine residues. Phosphorylation is important for interaction with scaffold proteins and effectors.

The protein localises to the cell membrane. It localises to the cell junction. Its subcellular location is the focal adhesion. The protein resides in the cytoplasm. It is found in the cytoskeleton. The catalysed reaction is L-tyrosyl-[protein] + ATP = O-phospho-L-tyrosyl-[protein] + ADP + H(+). With respect to regulation, angiopoietin binding leads to receptor dimerization and activation by autophosphorylation at Tyr-984 on the kinase activation loop. Tyrosine-protein kinase that acts as a cell-surface receptor for angiopoietins and regulates angiogenesis, endothelial cell survival, proliferation, migration, adhesion and cell spreading, reorganization of the actin cytoskeleton, but also maintenance of vascular quiescence. Can activate or inhibit angiogenesis, depending on the context. Angiopoietin signaling triggers receptor dimerization and autophosphorylation at specific tyrosine residues that then serve as binding sites for scaffold proteins and effectors. This Danio rerio (Zebrafish) protein is Angiopoietin-1 receptor.